We begin with the raw amino-acid sequence, 160 residues long: Calcium-binding protein CP1 (160 aa).

3 consecutive EF-hand domains span residues 22–49 (AFEI…IPSG), 52–87 (NDET…TPFS), and 93–128 (GDDG…AGLA). Residues Asp27, Asp29, Asp31, Lys33, Asp38, Asp65, Asn67, Asp69, Glu76, Asp106, Asp108, Asp110, Arg112, and Asp117 each contribute to the Ca(2+) site.

Expressed in roots and flowers.

It localises to the cytoplasm. The protein resides in the cytosol. Binds calcium in vitro. The protein is Calcium-binding protein CP1 of Arabidopsis thaliana (Mouse-ear cress).